Here is a 338-residue protein sequence, read N- to C-terminus: Mitoferrin-1 (338 aa).

The interval 1–37 (MELRRGGVGNQAAGRRMDGDCRDGGCGSKDAGSEDYE) is disordered. Solcar repeat units lie at residues 43 to 131 (ASVS…MKRT), 141 to 225 (NSHL…LQEQ), and 232 to 326 (YNPQ…FKYI). The next 6 membrane-spanning stretches (helical) occupy residues 45–64 (VSTHMTAGAMAGILEHSIMY), 106–125 (GLNVMMMGAGPAHAMYFACY), 143–162 (HLANGVAGSMATLLHDAVMN), 200–219 (SYTTQLTMNIPFQSIHFITY), 234–253 (PQSHIISGGLAGALAAAATT), and 301–320 (GIQARVIYQMPSTAISWSVY).

Belongs to the mitochondrial carrier (TC 2.A.29) family. In terms of assembly, interacts with ACB10; this interaction stabilizes SLC25A37 and enhances the function of SLC25A37 to import mitochondrial iron during erythroid differentiation. As to expression, highly expressed in hematopoietic organs, fetal liver, bone marrow and spleen.

It localises to the mitochondrion inner membrane. The catalysed reaction is Fe(2+)(in) = Fe(2+)(out). Mitochondrial iron transporter that specifically mediates iron uptake in developing erythroid cells, thereby playing an essential role in heme biosynthesis. The sequence is that of Mitoferrin-1 (Slc25a37) from Mus musculus (Mouse).